The sequence spans 652 residues: MPDRLVPATLARRDDGILVSPEYGELPRDASHARAHANRMLAGTGLPAHWRGRRTFTIVETGFGTGSRFLATWAAWRDDPARCERLHFVAIEPHPFARDDLRRAVSNFVADTTISENADALLDAWPMHVPGLHRLEFDAGRVVLTLAFGDAHDMLQRLVARADAFYLGNLASAAHGDVLSADVIRALARIAADGATYATHSHDDAVKHALEQTGFTSRDVEDGAGEPALRVGEYAPRWRMRRHEPPRALPVASREAIVIGAGLAGCAVVERLAARGWNITLIERHEQIASEASGNPAGVFHPLMTRDDNVASRLTRSGFLHALARWRALEEAGHAFARSTRGMIHLAESADDFARMRDAFDALGAPSDYVSLLDTDAARAHLNLPVAHGGLLFPHGGAVWPAGVCAAQIAAAGERVKLLAGTEVARLERDRDMWRAVDAASATLAEAPVVVLANAGDAVRLAGLRHVALQPVRGQLTLLPPGSTAPLPCPTIGDGYAVPLDDGTLLIGATFEPDDVDRTMRTAGHIENLERVRHLLPGLIGELPDVDTLRGRVAFRWVVADRVPVIGPLADEAQGVANARALSGAKARDLPRAAGLYGAFGYGSRGLVWAALGAELIASQLEGEPLPLERELVDAVDPARFLIRALRGRQIG.

Positions 1–235 (MPDRLVPATL…EPALRVGEYA (235 aa)) are tRNA (mnm(5)s(2)U34)-methyltransferase. The segment at 259–652 (IGAGLAGCAV…IRALRGRQIG (394 aa)) is FAD-dependent cmnm(5)s(2)U34 oxidoreductase.

It in the N-terminal section; belongs to the methyltransferase superfamily. tRNA (mnm(5)s(2)U34)-methyltransferase family. In the C-terminal section; belongs to the DAO family. FAD serves as cofactor.

It is found in the cytoplasm. The catalysed reaction is 5-aminomethyl-2-thiouridine(34) in tRNA + S-adenosyl-L-methionine = 5-methylaminomethyl-2-thiouridine(34) in tRNA + S-adenosyl-L-homocysteine + H(+). Its function is as follows. Catalyzes the last two steps in the biosynthesis of 5-methylaminomethyl-2-thiouridine (mnm(5)s(2)U) at the wobble position (U34) in tRNA. Catalyzes the FAD-dependent demodification of cmnm(5)s(2)U34 to nm(5)s(2)U34, followed by the transfer of a methyl group from S-adenosyl-L-methionine to nm(5)s(2)U34, to form mnm(5)s(2)U34. The chain is tRNA 5-methylaminomethyl-2-thiouridine biosynthesis bifunctional protein MnmC from Burkholderia ambifaria (strain MC40-6).